The sequence spans 722 residues: MAR-binding filament-like protein 1-1 (722 aa).

A disordered region spans residues 1–20 (MGSSCFPQSPLSHSLFSSSS). The transit peptide at 1–50 (MGSSCFPQSPLSHSLFSSSSLSSSQFTPLLFSPRNAQKCKKKMPAMACIH) directs the protein to the chloroplast. Residues 51–84 (SENQKESEFCSRRTILFVGFSVLPLLSLRANAFE) constitute a thylakoid transit peptide. Topologically, residues 85–112 (GLSVDSQVKAQPQKEETEQTIQGNAENP) are lumenal, thylakoid. The helical transmembrane segment at 113–133 (FFSLLNGLGVFGSGVLGSLYA) threads the bilayer. The Stromal segment spans residues 134-722 (LARNEKAVSD…TQPASQQESS (589 aa)). A coiled-coil region spans residues 146–679 (IESMKNKLKE…KGEILRLRTQ (534 aa)). The tract at residues 687–722 (VNNEEKVEAGEKAAVTVKRTRRRKTATQPASQQESS) is disordered. Residues 705–712 (RTRRRKTA) carry the Nuclear localization signal motif.

Interacts with PTST2; the interaction is essential for the initiation of starch granules biosynthesis in leaf chloroplasts, for the correct location of the process in the stromal spaces between the thylakoid membranes, and for the association of PTST2 with the thylakoid membranes. Predicted to be translocated into the thylakoid by the Tat system.

Its subcellular location is the plastid. The protein localises to the chloroplast. It is found in the chloroplast thylakoid membrane. It localises to the chloroplast stroma. The protein resides in the chloroplast nucleoid. Its subcellular location is the nucleus. The protein localises to the nucleus matrix. Required for the initiation of starch granules biosynthesis in leaf chloroplasts. Anchored to the thylakoid membranes with its C-terminus facing into the stroma where it is essential for localizing PTST2 and SS4 to the stromal spaces between the thylakoid membranes in order to begin starch granule formation. Associated with leaf chloroplastic nucleoids in vivo. Binds to various chloroplastic double-stranded DNA fragments without particular sequence specificity in vitro. May function at the interface between nucleoids and thylakoids possibly by anchoring nucleoids to the thylakoid membrane system in mature chloroplasts. Likely to participate in nuclear architecture by connecting chromatin with the nuclear matrix and potentially with the nuclear envelope. This chain is MAR-binding filament-like protein 1-1, found in Nicotiana tabacum (Common tobacco).